The primary structure comprises 135 residues: Small ribosomal subunit protein bS16 (135 aa).

The interval 82–135 (RPAETVGKAKQAAKREADAKQAAKEAAEAKAAAADEKAAEAEASDSAESESTEG) is disordered. Positions 94 to 121 (AKREADAKQAAKEAAEAKAAAADEKAAE) are enriched in basic and acidic residues. Acidic residues predominate over residues 123 to 135 (EASDSAESESTEG).

It belongs to the bacterial ribosomal protein bS16 family.

In Synechococcus sp. (strain CC9605), this protein is Small ribosomal subunit protein bS16.